Here is a 210-residue protein sequence, read N- to C-terminus: Somatotropin (210 aa).

The first 22 residues, 1-22, serve as a signal peptide directing secretion; sequence MGQVFLLMPVLLVSCFLSQGAA. Residue histidine 38 coordinates Zn(2+). Cysteine 71 and cysteine 183 form a disulfide bridge. Glutamate 192 lines the Zn(2+) pocket. A disulfide bridge links cysteine 200 with cysteine 208.

The protein belongs to the somatotropin/prolactin family.

The protein localises to the secreted. Functionally, growth hormone plays an important role in growth control and is involved in the regulation of several anabolic processes. Implicated as an osmoregulatory substance important for seawater adaptation. This chain is Somatotropin (gh), found in Salmo salar (Atlantic salmon).